The chain runs to 161 residues: Ribonuclease H (161 aa).

Positions M1–Q142 constitute an RNase H type-1 domain. D10, E48, D70, and D134 together coordinate Mg(2+).

It belongs to the RNase H family. As to quaternary structure, monomer. The cofactor is Mg(2+).

The protein localises to the cytoplasm. It catalyses the reaction Endonucleolytic cleavage to 5'-phosphomonoester.. Functionally, endonuclease that specifically degrades the RNA of RNA-DNA hybrids. The polypeptide is Ribonuclease H (rnhA) (Buchnera aphidicola subsp. Schizaphis graminum (strain Sg)).